The chain runs to 268 residues: 3-deoxy-manno-octulosonate cytidylyltransferase (268 aa).

The protein belongs to the KdsB family.

The protein localises to the cytoplasm. The enzyme catalyses 3-deoxy-alpha-D-manno-oct-2-ulosonate + CTP = CMP-3-deoxy-beta-D-manno-octulosonate + diphosphate. Its pathway is nucleotide-sugar biosynthesis; CMP-3-deoxy-D-manno-octulosonate biosynthesis; CMP-3-deoxy-D-manno-octulosonate from 3-deoxy-D-manno-octulosonate and CTP: step 1/1. The protein operates within bacterial outer membrane biogenesis; lipopolysaccharide biosynthesis. Its function is as follows. Activates KDO (a required 8-carbon sugar) for incorporation into bacterial lipopolysaccharide in Gram-negative bacteria. The polypeptide is 3-deoxy-manno-octulosonate cytidylyltransferase (Psychrobacter cryohalolentis (strain ATCC BAA-1226 / DSM 17306 / VKM B-2378 / K5)).